The following is a 423-amino-acid chain: CDP-diacylglycerol--serine O-phosphatidyltransferase 2 (423 aa).

9 helical membrane passes run Pro-38–Leu-58, Trp-77–Ile-97, Val-103–Phe-123, Leu-195–Leu-215, Trp-222–Met-242, Phe-294–Leu-314, Trp-319–Ile-339, Gly-359–Phe-379, and Thr-390–Trp-410.

Belongs to the CDP-alcohol phosphatidyltransferase class-I family.

The protein localises to the endoplasmic reticulum membrane. The catalysed reaction is a CDP-1,2-diacyl-sn-glycerol + L-serine = a 1,2-diacyl-sn-glycero-3-phospho-L-serine + CMP + H(+). It functions in the pathway phospholipid metabolism; phosphatidylethanolamine biosynthesis; phosphatidylethanolamine from CDP-diacylglycerol: step 1/2. Its function is as follows. Catalyzes a base-exchange reaction in which the polar head group of phosphatidylethanolamine (PE) or phosphatidylcholine (PC) is replaced by L-serine. The chain is CDP-diacylglycerol--serine O-phosphatidyltransferase 2 (PSS2) from Oryza sativa subsp. japonica (Rice).